A 492-amino-acid chain; its full sequence is Ribose import ATP-binding protein RbsA (492 aa).

ABC transporter domains follow at residues 3 to 239 (IDMR…VGRK) and 238 to 492 (RKLE…TGGK). 35 to 42 (GENGAGKS) serves as a coordination point for ATP.

It belongs to the ABC transporter superfamily. Ribose importer (TC 3.A.1.2.1) family. The complex is composed of an ATP-binding protein (RbsA), two transmembrane proteins (RbsC) and a solute-binding protein (RbsB).

The protein resides in the cell membrane. The enzyme catalyses D-ribose(out) + ATP + H2O = D-ribose(in) + ADP + phosphate + H(+). Functionally, part of the ABC transporter complex RbsABC involved in ribose import. Responsible for energy coupling to the transport system. In Streptococcus agalactiae serotype Ia (strain ATCC 27591 / A909 / CDC SS700), this protein is Ribose import ATP-binding protein RbsA.